The sequence spans 195 residues: Dephospho-CoA kinase (195 aa).

Residues 4–195 (IIGLTGGIAS…EQILDALQRL (192 aa)) enclose the DPCK domain. 12–17 (ASGKST) provides a ligand contact to ATP.

It belongs to the CoaE family.

Its subcellular location is the cytoplasm. The enzyme catalyses 3'-dephospho-CoA + ATP = ADP + CoA + H(+). Its pathway is cofactor biosynthesis; coenzyme A biosynthesis; CoA from (R)-pantothenate: step 5/5. Functionally, catalyzes the phosphorylation of the 3'-hydroxyl group of dephosphocoenzyme A to form coenzyme A. The chain is Dephospho-CoA kinase from Streptococcus agalactiae serotype Ia (strain ATCC 27591 / A909 / CDC SS700).